We begin with the raw amino-acid sequence, 505 residues long: Apolipoprotein N-acyltransferase (505 aa).

The next 6 membrane-spanning stretches (helical) occupy residues 26–46, 66–86, 89–109, 129–149, 161–181, and 186–206; these read FAPYQLWPIAILSPAILLILL, FATGVSWVYVSISGFGGMPLI, LFLMGMLIAYLAVYSGLFAWL, LWLITDWLRGWVMTGFPWLWL, FAPIGGVELLTLFVLISAGAL, and IHKQWLMIIIPVVLMSAGFGI. In terms of domain architecture, CN hydrolase spans 225–471; the sequence is IQGNVDQNLK…TAVLRAELTP (247 aa). Glu264 functions as the Proton acceptor in the catalytic mechanism. Lys330 is an active-site residue. Catalysis depends on Cys382, which acts as the Nucleophile. A helical membrane pass occupies residues 481-501; that stretch reads FGTWPLYFWVALSLMLAWWLP.

The protein belongs to the CN hydrolase family. Apolipoprotein N-acyltransferase subfamily.

The protein localises to the cell inner membrane. It catalyses the reaction N-terminal S-1,2-diacyl-sn-glyceryl-L-cysteinyl-[lipoprotein] + a glycerophospholipid = N-acyl-S-1,2-diacyl-sn-glyceryl-L-cysteinyl-[lipoprotein] + a 2-acyl-sn-glycero-3-phospholipid + H(+). It participates in protein modification; lipoprotein biosynthesis (N-acyl transfer). Functionally, catalyzes the phospholipid dependent N-acylation of the N-terminal cysteine of apolipoprotein, the last step in lipoprotein maturation. The polypeptide is Apolipoprotein N-acyltransferase (Vibrio parahaemolyticus serotype O3:K6 (strain RIMD 2210633)).